The chain runs to 377 residues: MGEIQTLNAKQQAGKPVIRLSGISKSFDGKEIIGNLNLDVNHGEFLTILGPSGCGKTTVLRMIAGFETADNGQIVLDDQDVTQVPAEHRHVNTVFQSYALFPHMTVFDNVAFGLRMQKTPAAEIEPRVMEALRMVRLEKMAQRKPHQLSGGQQQRIAIARAVVNKPKVLLLDESLSALDYKLRKQMQIELKQLQRQLGITFIFVTHDQEEALSMSDRIIVMRDGVIEQDGSPREIYEEPKNLFVARFIGEINVFNATMLERIDEKRIRAEIEGVESVVYYDKEAQAGDKLQVLLRPEDLRIEEIKESEEKGIVGHVTERTYKGMTLDSVVQLDSGMRVMVSEFFNEDDPDVDHSLGQKVAITWVESWEVVLNDKQED.

The ABC transporter domain maps to 18-248 (IRLSGISKSF…PKNLFVARFI (231 aa)). 50–57 (GPSGCGKT) contributes to the ATP binding site.

It belongs to the ABC transporter superfamily. Spermidine/putrescine importer (TC 3.A.1.11.1) family. The complex is composed of two ATP-binding proteins (PotA), two transmembrane proteins (PotB and PotC) and a solute-binding protein (PotD).

It is found in the cell inner membrane. It carries out the reaction ATP + H2O + polyamine-[polyamine-binding protein]Side 1 = ADP + phosphate + polyamineSide 2 + [polyamine-binding protein]Side 1.. Its function is as follows. Part of the ABC transporter complex PotABCD involved in spermidine/putrescine import. Responsible for energy coupling to the transport system. The chain is Spermidine/putrescine import ATP-binding protein PotA from Vibrio parahaemolyticus serotype O3:K6 (strain RIMD 2210633).